The chain runs to 333 residues: Phenylalanine--tRNA ligase alpha subunit (333 aa).

Residue Glu-248 participates in Mg(2+) binding.

It belongs to the class-II aminoacyl-tRNA synthetase family. Phe-tRNA synthetase alpha subunit type 1 subfamily. Tetramer of two alpha and two beta subunits. Mg(2+) is required as a cofactor.

The protein localises to the cytoplasm. The catalysed reaction is tRNA(Phe) + L-phenylalanine + ATP = L-phenylalanyl-tRNA(Phe) + AMP + diphosphate + H(+). The sequence is that of Phenylalanine--tRNA ligase alpha subunit from Ureaplasma parvum serovar 3 (strain ATCC 27815 / 27 / NCTC 11736).